A 445-amino-acid chain; its full sequence is Exodeoxyribonuclease 7 large subunit (445 aa).

The protein belongs to the XseA family. In terms of assembly, heterooligomer composed of large and small subunits.

It is found in the cytoplasm. The catalysed reaction is Exonucleolytic cleavage in either 5'- to 3'- or 3'- to 5'-direction to yield nucleoside 5'-phosphates.. Its function is as follows. Bidirectionally degrades single-stranded DNA into large acid-insoluble oligonucleotides, which are then degraded further into small acid-soluble oligonucleotides. This chain is Exodeoxyribonuclease 7 large subunit, found in Limosilactobacillus reuteri (strain DSM 20016) (Lactobacillus reuteri).